The sequence spans 496 residues: Lysine--tRNA ligase (496 aa).

Glutamate 405 and glutamate 412 together coordinate Mg(2+).

It belongs to the class-II aminoacyl-tRNA synthetase family. Homodimer. It depends on Mg(2+) as a cofactor.

The protein localises to the cytoplasm. It catalyses the reaction tRNA(Lys) + L-lysine + ATP = L-lysyl-tRNA(Lys) + AMP + diphosphate. This is Lysine--tRNA ligase from Vesicomyosocius okutanii subsp. Calyptogena okutanii (strain HA).